The following is a 100-amino-acid chain: Small ribosomal subunit protein uS14c (100 aa).

It belongs to the universal ribosomal protein uS14 family. In terms of assembly, part of the 30S ribosomal subunit.

It is found in the plastid. The protein localises to the chloroplast. Its function is as follows. Binds 16S rRNA, required for the assembly of 30S particles. The polypeptide is Small ribosomal subunit protein uS14c (Crucihimalaya wallichii (Rock-cress)).